The following is a 555-amino-acid chain: MKSFCDNDDNNHSNTTNLLGFSLSSNMMKMGGRGGREAIYSSSTSSAATSSSSVPPQLVVGDNTSNFGVCYGSNPNGGIYSHMSVMPLRSDGSLCLMEALNRSSHSNHHQDSSPKVEDFFGTHHNNTSHKEAMDLSLDSLFYNTTHEPNTTTNFQEFFSFPQTRNHEEETRNYGNDPSLTHGGSFNVGVYGEFQQSLSLSMSPGSQSSCITGSHHHQQNQNQNHQSQNHQQISEALVETSVGFETTTMAAAKKKRGQEDVVVVGQKQIVHRKSIDTFGQRTSQYRGVTRHRWTGRYEAHLWDNSFKKEGHSRKGRQVYLGGYDMEEKAARAYDLAALKYWGPSTHTNFSAENYQKEIEDMKNMTRQEYVAHLRRKSSGFSRGASIYRGVTRHHQHGRWQARIGRVAGNKDLYLGTFGTQEEAAEAYDVAAIKFRGTNAVTNFDITRYDVDRIMSSNTLLSGELARRNNNSIVVRNTEDQTALNAVVEGGSNKEVSTPERLLSFPAIFALPQVNQKMFGSNMGGNMSPWTSNPNAELKTVALTLPQMPVFAAWADS.

Disordered regions lie at residues 34-56 (GGRE…SVPP) and 199-231 (LSMS…NHQQ). 3 stretches are compositionally biased toward low complexity: residues 41 to 53 (SSST…SSSS), 199 to 208 (LSMSPGSQSS), and 218 to 231 (QNQN…NHQQ). DNA-binding regions (AP2/ERF) lie at residues 283–349 (QYRG…TNFS) and 385–443 (IYRG…TNFD).

This sequence belongs to the AP2/ERF transcription factor family. AP2 subfamily. As to quaternary structure, interacts with ANL2, HDG2 and HDG10, and possibly with GL2, HDG3, HDG8, ATML1 and PDF2. Mostly expressed in developing flowers. Also present in mature flowers, siliques and seedlings, but not in mature roots, leaves and stems. Expressed in ovules and in vegetative and floral primordia.

It is found in the nucleus. In terms of biological role, transcription activator that recognizes and binds to the DNA consensus sequence 5'-CAC[AG]N[AT]TNCCNANG-3'. Required for the initiation and growth of ovules integumenta, and for the development of female gametophyte. Plays a critical role in the development of gynoecium marginal tissues (e.g. stigma, style and septa), and in the fusion of carpels and of medial ridges leading to ovule primordia. Also involved in organs initiation and development, including floral organs. Maintains the meristematic competence of cells and consequently sustains expression of cell cycle regulators during organogenesis, thus controlling the final size of each organ by controlling their cell number. Regulates INO autoinduction and expression pattern. As ANT promotes petal cell identity and mediates down-regulation of AG in flower whorl 2, it functions as a class A homeotic gene. In Arabidopsis thaliana (Mouse-ear cress), this protein is AP2-like ethylene-responsive transcription factor ANT.